The chain runs to 563 residues: Urocanate hydratase (563 aa).

NAD(+) contacts are provided by residues 53–54, Q131, 177–179, E197, R202, 243–244, 264–268, 274–275, and Y323; these read GG, GMG, NA, QTSAH, and YL. C411 is a catalytic residue. G493 lines the NAD(+) pocket.

It belongs to the urocanase family. Requires NAD(+) as cofactor.

The protein localises to the cytoplasm. It catalyses the reaction 4-imidazolone-5-propanoate = trans-urocanate + H2O. Its pathway is amino-acid degradation; L-histidine degradation into L-glutamate; N-formimidoyl-L-glutamate from L-histidine: step 2/3. In terms of biological role, catalyzes the conversion of urocanate to 4-imidazolone-5-propionate. The protein is Urocanate hydratase of Yersinia enterocolitica serotype O:8 / biotype 1B (strain NCTC 13174 / 8081).